Here is a 275-residue protein sequence, read N- to C-terminus: Autophagy protein 5 (275 aa).

At methionine 1 the chain carries N-acetylmethionine. Residue lysine 130 forms a Glycyl lysine isopeptide (Lys-Gly) (interchain with G-Cter in ATG12) linkage.

This sequence belongs to the ATG5 family. In terms of assembly, forms a conjugate with ATG12. Part of the minor complex composed of 4 sets of ATG12-ATG5 and ATG16L1 (400 kDa); this complex interacts with ATG3 leading to disruption of ATG7 interaction and promotion of ATG8-like proteins lipidation. Forms an 800-kDa complex composed of ATG12-ATG5 and ATG16L2. The ATG12-ATG5 conjugate interacts with RAB33A; this interaction is bridged by ATG16L1 and promotes ATG12-ATG5-ATG16L1 complex recruitment to phagophores. Interacts with TECPR1; the interaction is direct and does not take place when ATG16L1 is associated with the ATG5-ATG12 conjugate. Interacts with DHX58/RIG-1, IFIH1/MDA5 and MAVS/IPS-1 in monomeric form as well as in ATG12-ATG5 conjugate form. The interaction with MAVS is further enhanced upon vesicular stomatitis virus (VSV) infection. Interacts with ATG3. Interacts with ATG7 and ATG10. Interacts with FADD. Interacts with Bassoon/BSN; this interaction is important for the regulation of presynaptic autophagy. Interacts with ATG16L2. Conjugated to ATG12; which is essential for autophagy, but is not required for association with isolation membrane. In terms of processing, acetylated by EP300. As to expression, ubiquitous.

Its subcellular location is the cytoplasm. The protein localises to the preautophagosomal structure membrane. Involved in autophagic vesicle formation. Conjugation with ATG12, through a ubiquitin-like conjugating system involving ATG7 as an E1-like activating enzyme and ATG10 as an E2-like conjugating enzyme, is essential for its function. The ATG12-ATG5 conjugate acts as an E3-like enzyme which is required for lipidation of ATG8 family proteins and their association to the vesicle membranes. Involved in mitochondrial quality control after oxidative damage, and in subsequent cellular longevity. Plays a critical role in multiple aspects of lymphocyte development and is essential for both B and T lymphocyte survival and proliferation. Required for optimal processing and presentation of antigens for MHC II. Involved in the maintenance of axon morphology and membrane structures, as well as in normal adipocyte differentiation. Promotes primary ciliogenesis through removal of OFD1 from centriolar satellites and degradation of IFT20 via the autophagic pathway. As part of the ATG8 conjugation system with ATG12 and ATG16L1, required for recruitment of LRRK2 to stressed lysosomes and induction of LRRK2 kinase activity in response to lysosomal stress. In terms of biological role, may play an important role in the apoptotic process, possibly within the modified cytoskeleton. Its expression is a relatively late event in the apoptotic process, occurring downstream of caspase activity. Plays a crucial role in IFN-gamma-induced autophagic cell death by interacting with FADD. Functionally, (Microbial infection) May act as a proviral factor. In association with ATG12, negatively regulates the innate antiviral immune response by impairing the type I IFN production pathway upon vesicular stomatitis virus (VSV) infection. The protein is Autophagy protein 5 of Mus musculus (Mouse).